The sequence spans 406 residues: 2,3-diketo-5-methylthiopentyl-1-phosphate enolase (406 aa).

K94 serves as the catalytic Proton acceptor. Residues K143, 169–172 (KDDE), H260, G332, and 354–355 (GG) contribute to the substrate site. K169, D171, and E172 together coordinate Mg(2+). The residue at position 169 (K169) is an N6-carboxylysine.

This sequence belongs to the RuBisCO large chain family. Type IV subfamily. In terms of assembly, homodimer. It depends on Mg(2+) as a cofactor.

It carries out the reaction 5-methylsulfanyl-2,3-dioxopentyl phosphate = 2-hydroxy-5-methylsulfanyl-3-oxopent-1-enyl phosphate. It functions in the pathway amino-acid biosynthesis; L-methionine biosynthesis via salvage pathway; L-methionine from S-methyl-5-thio-alpha-D-ribose 1-phosphate: step 3/6. In terms of biological role, catalyzes the enolization of 2,3-diketo-5-methylthiopentyl-1-phosphate (DK-MTP-1-P) into 2-hydroxy-3-keto-5-methylthiopentenyl-1-phosphate (HK-MTPenyl-1-P). In Bacillus pumilus (strain SAFR-032), this protein is 2,3-diketo-5-methylthiopentyl-1-phosphate enolase.